The following is a 300-amino-acid chain: Bifunctional protein FolD 2 (300 aa).

NADP(+)-binding positions include 165–167, serine 190, and isoleucine 231; that span reads GRS.

It belongs to the tetrahydrofolate dehydrogenase/cyclohydrolase family. In terms of assembly, homodimer.

The catalysed reaction is (6R)-5,10-methylene-5,6,7,8-tetrahydrofolate + NADP(+) = (6R)-5,10-methenyltetrahydrofolate + NADPH. It carries out the reaction (6R)-5,10-methenyltetrahydrofolate + H2O = (6R)-10-formyltetrahydrofolate + H(+). It functions in the pathway one-carbon metabolism; tetrahydrofolate interconversion. Functionally, catalyzes the oxidation of 5,10-methylenetetrahydrofolate to 5,10-methenyltetrahydrofolate and then the hydrolysis of 5,10-methenyltetrahydrofolate to 10-formyltetrahydrofolate. The sequence is that of Bifunctional protein FolD 2 from Pseudomonas syringae pv. tomato (strain ATCC BAA-871 / DC3000).